We begin with the raw amino-acid sequence, 662 residues long: DNA ligase (662 aa).

NAD(+) is bound by residues 31-35 (DYEYD), 80-81 (SL), and E109. Catalysis depends on K111, which acts as the N6-AMP-lysine intermediate. Positions 132, 166, 282, and 306 each coordinate NAD(+). 4 residues coordinate Zn(2+): C400, C403, C418, and C423. The BRCT domain maps to 581 to 662 (KVNNIFEGKT…FEEMLKGENI (82 aa)).

The protein belongs to the NAD-dependent DNA ligase family. LigA subfamily. Mg(2+) serves as cofactor. It depends on Mn(2+) as a cofactor.

The catalysed reaction is NAD(+) + (deoxyribonucleotide)n-3'-hydroxyl + 5'-phospho-(deoxyribonucleotide)m = (deoxyribonucleotide)n+m + AMP + beta-nicotinamide D-nucleotide.. Functionally, DNA ligase that catalyzes the formation of phosphodiester linkages between 5'-phosphoryl and 3'-hydroxyl groups in double-stranded DNA using NAD as a coenzyme and as the energy source for the reaction. It is essential for DNA replication and repair of damaged DNA. The sequence is that of DNA ligase from Thermoanaerobacter pseudethanolicus (strain ATCC 33223 / 39E) (Clostridium thermohydrosulfuricum).